Reading from the N-terminus, the 117-residue chain is Large ribosomal subunit protein bL20 (117 aa).

It belongs to the bacterial ribosomal protein bL20 family.

Functionally, binds directly to 23S ribosomal RNA and is necessary for the in vitro assembly process of the 50S ribosomal subunit. It is not involved in the protein synthesizing functions of that subunit. The protein is Large ribosomal subunit protein bL20 of Magnetococcus marinus (strain ATCC BAA-1437 / JCM 17883 / MC-1).